Here is a 140-residue protein sequence, read N- to C-terminus: Putative transmembrane protein 49 (140 aa).

2 consecutive transmembrane segments (helical) span residues 23 to 43 (LIMS…IGGV) and 93 to 110 (IAVH…RYMY).

Its subcellular location is the host membrane. The chain is Putative transmembrane protein 49 (SIFV0049) from Saccharolobus islandicus (Sulfolobus islandicus).